Here is a 121-residue protein sequence, read N- to C-terminus: Putative iron-sulfur cluster insertion protein ErpA (121 aa).

Iron-sulfur cluster contacts are provided by C49, C113, and C115.

It belongs to the HesB/IscA family. Homodimer. It depends on iron-sulfur cluster as a cofactor.

Functionally, required for insertion of 4Fe-4S clusters. The sequence is that of Putative iron-sulfur cluster insertion protein ErpA from Verminephrobacter eiseniae (strain EF01-2).